We begin with the raw amino-acid sequence, 263 residues long: Small ribosomal subunit protein eS4 (263 aa).

Positions 42–104 constitute an S4 RNA-binding domain; sequence LPLIIFLRNR…TGENFRLIYD (63 aa).

The protein belongs to the eukaryotic ribosomal protein eS4 family.

This is Small ribosomal subunit protein eS4 (RPS4) from Cricetulus griseus (Chinese hamster).